A 400-amino-acid polypeptide reads, in one-letter code: Endoglucanase 5A (400 aa).

Residues 1–26 form the signal peptide; it reads MKKITTIFVVLLMTVALFSIGNTTAA. Substrate is bound by residues H61, 65 to 66, Y92, and H127; that span reads WY. E165 acts as the Proton donor in catalysis. Y228 is a binding site for substrate. E254 functions as the Nucleophile in the catalytic mechanism. Residues 260 to 261, W288, and 293 to 295 contribute to the substrate site; these read AT and KDE. The segment at 328–363 is disordered; it reads ESASIPPSDPTPPSDPGEPDPTPPSDPGEYPAWDPN. Pro residues predominate over residues 334 to 353; it reads PSDPTPPSDPGEPDPTPPSD. Residues 357 to 396 form the Chitin-binding type-3 domain; it reads YPAWDPNQIYTNEIVYHNGQLWQAKWWTQNQEPGDPYGPW.

It belongs to the glycosyl hydrolase 5 (cellulase A) family. As to quaternary structure, monomer.

It is found in the secreted. It catalyses the reaction Endohydrolysis of (1-&gt;4)-beta-D-glucosidic linkages in cellulose, lichenin and cereal beta-D-glucans.. The protein is Endoglucanase 5A (cel5A) of Salipaludibacillus agaradhaerens (Bacillus agaradhaerens).